A 160-amino-acid chain; its full sequence is Keratin-associated protein 13-4 (160 aa).

4 tandem repeats follow at residues 41–50, 51–60, 61–70, and 77–86. The tract at residues 41-86 is 4 X 10 AA approximate repeats; sequence CQLRSSLYRDCQKTCWEPASCQKSCYRPRTSILCCPCQTTCSGSLG.

Belongs to the PMG family. As to quaternary structure, interacts with hair keratins.

Its function is as follows. In the hair cortex, hair keratin intermediate filaments are embedded in an interfilamentous matrix, consisting of hair keratin-associated proteins (KRTAP), which are essential for the formation of a rigid and resistant hair shaft through their extensive disulfide bond cross-linking with abundant cysteine residues of hair keratins. The matrix proteins include the high-sulfur and high-glycine-tyrosine keratins. This chain is Keratin-associated protein 13-4 (KRTAP13-4), found in Homo sapiens (Human).